A 136-amino-acid chain; its full sequence is MRKNSIKNTRINQEVQKELSMLISRELKDPRINPMTSIVAVEVAPDLKTAKVYISVLGDELSQKNTLAGLKSAAPFLRGQLARGINLRNTPELLFVVDQSIEYGVSMSKLINEVNAGNHKASDEEESDDKGHEDEQ.

Positions alanine 116–glutamine 136 are disordered.

This sequence belongs to the RbfA family. Monomer. Binds 30S ribosomal subunits, but not 50S ribosomal subunits or 70S ribosomes.

The protein resides in the cytoplasm. One of several proteins that assist in the late maturation steps of the functional core of the 30S ribosomal subunit. Associates with free 30S ribosomal subunits (but not with 30S subunits that are part of 70S ribosomes or polysomes). Required for efficient processing of 16S rRNA. May interact with the 5'-terminal helix region of 16S rRNA. This chain is Ribosome-binding factor A, found in Lachnoclostridium phytofermentans (strain ATCC 700394 / DSM 18823 / ISDg) (Clostridium phytofermentans).